Consider the following 111-residue polypeptide: Protein RnfH (111 aa).

The segment at 88 to 111 (RRRRVQKTRESGTREGQKWLRGGA) is disordered. The span at 94–105 (KTRESGTREGQK) shows a compositional bias: basic and acidic residues.

Belongs to the UPF0125 (RnfH) family.

The protein is Protein RnfH of Cupriavidus pinatubonensis (strain JMP 134 / LMG 1197) (Cupriavidus necator (strain JMP 134)).